A 523-amino-acid polypeptide reads, in one-letter code: Glutamate--cysteine ligase (523 aa).

This sequence belongs to the glutamate--cysteine ligase type 1 family. Type 1 subfamily.

It catalyses the reaction L-cysteine + L-glutamate + ATP = gamma-L-glutamyl-L-cysteine + ADP + phosphate + H(+). Its pathway is sulfur metabolism; glutathione biosynthesis; glutathione from L-cysteine and L-glutamate: step 1/2. This is Glutamate--cysteine ligase from Shewanella oneidensis (strain ATCC 700550 / JCM 31522 / CIP 106686 / LMG 19005 / NCIMB 14063 / MR-1).